An 835-amino-acid polypeptide reads, in one-letter code: U-box domain-containing protein 35 (835 aa).

3 disordered regions span residues methionine 1–valine 22, valine 177–arginine 303, and glutamate 410–threonine 457. Positions leucine 10–serine 19 are enriched in pro residues. The span at arginine 195–aspartate 218 shows a compositional bias: low complexity. Over residues serine 269–tryptophan 282 the composition is skewed to polar residues. 2 stretches are compositionally biased toward basic and acidic residues: residues arginine 285–alanine 295 and glutamate 410–glutamate 455. Positions glutamine 340–glycine 459 form a coiled coil. The 266-residue stretch at phenylalanine 480–leucine 745 folds into the Protein kinase domain. ATP is bound by residues isoleucine 486–valine 494 and lysine 507. The active-site Proton acceptor is aspartate 602. Positions glutamine 765–arginine 835 constitute a U-box domain.

This sequence belongs to the protein kinase superfamily. Ser/Thr protein kinase family.

The catalysed reaction is L-seryl-[protein] + ATP = O-phospho-L-seryl-[protein] + ADP + H(+). It catalyses the reaction L-threonyl-[protein] + ATP = O-phospho-L-threonyl-[protein] + ADP + H(+). It carries out the reaction S-ubiquitinyl-[E2 ubiquitin-conjugating enzyme]-L-cysteine + [acceptor protein]-L-lysine = [E2 ubiquitin-conjugating enzyme]-L-cysteine + N(6)-ubiquitinyl-[acceptor protein]-L-lysine.. The protein operates within protein modification; protein ubiquitination. Functions as an E3 ubiquitin ligase. This Arabidopsis thaliana (Mouse-ear cress) protein is U-box domain-containing protein 35 (PUB35).